Reading from the N-terminus, the 492-residue chain is Aspartyl/glutamyl-tRNA(Asn/Gln) amidotransferase subunit B (492 aa).

This sequence belongs to the GatB/GatE family. GatB subfamily. In terms of assembly, heterotrimer of A, B and C subunits.

The enzyme catalyses L-glutamyl-tRNA(Gln) + L-glutamine + ATP + H2O = L-glutaminyl-tRNA(Gln) + L-glutamate + ADP + phosphate + H(+). The catalysed reaction is L-aspartyl-tRNA(Asn) + L-glutamine + ATP + H2O = L-asparaginyl-tRNA(Asn) + L-glutamate + ADP + phosphate + 2 H(+). Functionally, allows the formation of correctly charged Asn-tRNA(Asn) or Gln-tRNA(Gln) through the transamidation of misacylated Asp-tRNA(Asn) or Glu-tRNA(Gln) in organisms which lack either or both of asparaginyl-tRNA or glutaminyl-tRNA synthetases. The reaction takes place in the presence of glutamine and ATP through an activated phospho-Asp-tRNA(Asn) or phospho-Glu-tRNA(Gln). This Bradyrhizobium diazoefficiens (strain JCM 10833 / BCRC 13528 / IAM 13628 / NBRC 14792 / USDA 110) protein is Aspartyl/glutamyl-tRNA(Asn/Gln) amidotransferase subunit B.